The sequence spans 153 residues: Large ribosomal subunit protein uL29 (153 aa).

Positions 1 to 83 (MNKELRAKTN…KEQTKQKEIQ (83 aa)) are large ribosomal subunit protein uL29. The tract at residues 84-153 (ESVKKIKQLR…NVKAKTKKKG (70 aa)) is unknown. A compositionally biased stretch (basic and acidic residues) spans 100–121 (NKEKRLANAEKVKAAPKPEQKT). A disordered region spans residues 100 to 153 (NKEKRLANAEKVKAAPKPEQKTKKVKKAPKKTETVKPTTNKNKKNVKAKTKKKG). Over residues 140-153 (KNKKNVKAKTKKKG) the composition is skewed to basic residues.

Belongs to the universal ribosomal protein uL29 family.

In Mycoplasmoides gallisepticum (strain R(low / passage 15 / clone 2)) (Mycoplasma gallisepticum), this protein is Large ribosomal subunit protein uL29.